The chain runs to 538 residues: MTWMRVMPRCQNRTYKRPRGPPLSIHPLEFFQAKKVEKTAKAKMILYYLASIPLAIICYLAWYLHVPWDLPSLPRIPFYVSILGLWSSMGQDEIYERWLRKPLEAHGAVLIWFAGRWSILVTRPDLLTDMFRNEDLYAKAGSQKKIPWSVIATLVGDNIINSHGDTWKLYTGIMKPGLQKKNFDTAPLLLKSRRFVDEILAEQNSAGRGTGILVNTFVQQWAVDVMGMSFLDLDLQSLEKPHGTVRLEAIQSVIKLMLFRPLFFNFPDLDQFAWLIKSRQRAYEIMHEFGDTLMATVLGRIDSDREKGIKPAEEMVVHMLVDAYRDGRLTEKQFKDNLKIVFLTAHENAQQLVNSMFWEIGKNNEVQTRLRAEILSTNTTTPTSEVVNALPYLTAVVYELLRLYPPVSQLINRVTVRPAMLGNEIPIPAGTFVGWNAYGVHVNPAIWGPDANEFKPERWGRTVGEMHARFRRETVRGTYIPFNAHSRKCLGQGFVLLQMKILLFEVLRRIEWTVDPGYRLKMTPVSYFLESGRKSTDA.

The helical transmembrane segment at 44 to 64 (MILYYLASIPLAIICYLAWYL) threads the bilayer. Asn378 carries N-linked (GlcNAc...) asparagine glycosylation. Cys489 lines the heme pocket.

The protein belongs to the cytochrome P450 family. The cofactor is heme.

Its subcellular location is the membrane. It functions in the pathway secondary metabolite biosynthesis. Cytochrome P450 monooxygenase; part of the gene cluster that mediates the biosynthesis of the isocyanide xanthocillin and its derivatives. The first step of the pathway consists in the conversion of tyrosine into a vinyl-isonitrile intermediate by the isocyanide synthase xanB. Subsequent oxidative dimerization of this intermediate to form xanthocillin may involve the cytochrome P450 monooxygenase xanG, whose expression is coregulated with that of XanB. Xanthocillin can be further modified by the isonitrile hydratase-like protein xanA which introduces N-formyl groups and the methyltransferase xanE which introduces methyl groups, leading to the production of several derivatives including fumiformamide. Finally, fumiformamide can be subject to both oxidative and reductive cyclization to yield melanocins E and F, respectively. The protein is Cytochrome P450 monooxygenase xanG of Aspergillus fumigatus (strain ATCC MYA-4609 / CBS 101355 / FGSC A1100 / Af293) (Neosartorya fumigata).